The following is a 406-amino-acid chain: Tryptophan synthase beta chain (406 aa).

Lys-99 carries the N6-(pyridoxal phosphate)lysine modification.

It belongs to the TrpB family. As to quaternary structure, tetramer of two alpha and two beta chains. Requires pyridoxal 5'-phosphate as cofactor.

The enzyme catalyses (1S,2R)-1-C-(indol-3-yl)glycerol 3-phosphate + L-serine = D-glyceraldehyde 3-phosphate + L-tryptophan + H2O. The protein operates within amino-acid biosynthesis; L-tryptophan biosynthesis; L-tryptophan from chorismate: step 5/5. Its function is as follows. The beta subunit is responsible for the synthesis of L-tryptophan from indole and L-serine. The sequence is that of Tryptophan synthase beta chain from Brucella abortus (strain 2308).